We begin with the raw amino-acid sequence, 538 residues long: Pentachlorophenol 4-monooxygenase (538 aa).

Residues 16 to 45 and 288 to 298 contribute to the FAD site; these read AVLI…MIDR and YRKGNVFLAGD.

Belongs to the PheA/TfdB FAD monooxygenase family. As to quaternary structure, homodimer. Requires FAD as cofactor.

The enzyme catalyses pentachlorophenol + NADPH + O2 + H(+) = 2,3,5,6-tetrachloro-1,4-benzoquinone + chloride + NADP(+) + H2O. It carries out the reaction 2,3,5,6-tetrachlorophenol + NADPH + O2 = 2,3,5,6-tetrachlorohydroquinone + NADP(+) + H2O. Its pathway is xenobiotic degradation; pentachlorophenol degradation. Functionally, dechlorination of pentachlorophenol to tetrachlorobenzoquinone. Also removes hydrogen and nitro, amino, and cyano groups from benzene ring at the para position in relation to the hydroxyl of phenol. The polypeptide is Pentachlorophenol 4-monooxygenase (pcpB) (Sphingobium chlorophenolicum).